A 471-amino-acid polypeptide reads, in one-letter code: Ribulose bisphosphate carboxylase large chain (471 aa).

At K5 the chain carries N6,N6,N6-trimethyllysine. Residues N114 and T164 each coordinate substrate. K166 (proton acceptor) is an active-site residue. Residue K168 coordinates substrate. K192, D194, and E195 together coordinate Mg(2+). N6-carboxylysine is present on K192. H285 functions as the Proton acceptor in the catalytic mechanism. 3 residues coordinate substrate: R286, H318, and S370.

This sequence belongs to the RuBisCO large chain family. Type I subfamily. In terms of assembly, heterohexadecamer of 8 large chains and 8 small chains; disulfide-linked. The disulfide link is formed within the large subunit homodimers. Mg(2+) is required as a cofactor. The disulfide bond which can form in the large chain dimeric partners within the hexadecamer appears to be associated with oxidative stress and protein turnover.

The protein localises to the plastid. The protein resides in the chloroplast. The catalysed reaction is 2 (2R)-3-phosphoglycerate + 2 H(+) = D-ribulose 1,5-bisphosphate + CO2 + H2O. It catalyses the reaction D-ribulose 1,5-bisphosphate + O2 = 2-phosphoglycolate + (2R)-3-phosphoglycerate + 2 H(+). Functionally, ruBisCO catalyzes two reactions: the carboxylation of D-ribulose 1,5-bisphosphate, the primary event in carbon dioxide fixation, as well as the oxidative fragmentation of the pentose substrate in the photorespiration process. Both reactions occur simultaneously and in competition at the same active site. The chain is Ribulose bisphosphate carboxylase large chain from Deppea grandiflora.